Here is a 316-residue protein sequence, read N- to C-terminus: Pantothenate kinase (316 aa).

95–102 (GSVAVGKS) contributes to the ATP binding site.

It belongs to the prokaryotic pantothenate kinase family.

It is found in the cytoplasm. It carries out the reaction (R)-pantothenate + ATP = (R)-4'-phosphopantothenate + ADP + H(+). It participates in cofactor biosynthesis; coenzyme A biosynthesis; CoA from (R)-pantothenate: step 1/5. This chain is Pantothenate kinase, found in Pectobacterium carotovorum subsp. carotovorum (strain PC1).